Consider the following 116-residue polypeptide: Alpha-defensin 29 (116 aa).

An N-terminal signal peptide occupies residues 1-19; sequence MKTLVLLSALVLPCFQVQA. Residues 20–60 constitute a propeptide that is removed on maturation; the sequence is DPIQNTDEETKTEEQPEEEDQAVSVSFGGTEGSALQDVAQR. The tract at residues 22 to 44 is disordered; it reads IQNTDEETKTEEQPEEEDQAVSV. 9 tandem repeats follow at residues 65–67, 68–70, 71–73, 74–76, 77–79, 80–82, 83–85, 86–88, and 89–91. Positions 65–70 are 2 X 3 AA tandem repeats of C-R-X; sequence CRKCRV. The 3 X 3 AA tandem repeats of C-Q-X stretch occupies residues 71–79; it reads CQKCQVCQK. Positions 80-91 are 4 X 3 AA tandem repeats of C-P-X; sequence CPVCPTCPQCPK.

This sequence belongs to the alpha-defensin family. In terms of tissue distribution, small bowel.

The protein resides in the secreted. Its function is as follows. Apparent precursor of a secreted, cationic, proline- and cysteine-rich peptide that contains Cys-Pro-Xaa repeats. Unlike cryptdin, the proposed mature peptide region lacks the structural motif characteristic of defensins. The protein is Alpha-defensin 29 of Mus musculus (Mouse).